We begin with the raw amino-acid sequence, 195 residues long: Small ribosomal subunit protein uS4c (195 aa).

Residues 82 to 143 enclose the S4 RNA-binding domain; that stretch reads MRLDNILFRL…KQRSKALIQN (62 aa).

The protein belongs to the universal ribosomal protein uS4 family. In terms of assembly, part of the 30S ribosomal subunit. Contacts protein S5. The interaction surface between S4 and S5 is involved in control of translational fidelity.

The protein localises to the plastid. The protein resides in the chloroplast. In terms of biological role, one of the primary rRNA binding proteins, it binds directly to 16S rRNA where it nucleates assembly of the body of the 30S subunit. Functionally, with S5 and S12 plays an important role in translational accuracy. In Watsonia angusta, this protein is Small ribosomal subunit protein uS4c (rps4).